The following is a 204-amino-acid chain: Apoptosis regulator R11 (204 aa).

A BH1 motif is present at residues 101 to 120 (ELFRDGTNWGRIVAFFSFGR). Positions 152 to 167 (PWMQENGGWEAFVGLY) match the BH2 motif. The helical transmembrane segment at 181–198 (RFGRLLTIVMLTGVFALV) threads the bilayer.

The protein belongs to the Bcl-2 family.

The protein resides in the membrane. In terms of biological role, confers strong protection against cell death. This is Apoptosis regulator R11 from Xenopus laevis (African clawed frog).